We begin with the raw amino-acid sequence, 138 residues long: Putative membrane protein ORF6 (138 aa).

A run of 2 helical transmembrane segments spans residues 4–20 and 37–53; these read LTII…HAVL and VVVL…LMTI.

It localises to the membrane. This Ictalurid herpesvirus 1 (strain Auburn) (IcHV-1) protein is Putative membrane protein ORF6 (ORF6).